Consider the following 269-residue polypeptide: Shikimate dehydrogenase (NADP(+)) (269 aa).

Residues 14-16 (SKS) and Thr61 each bind shikimate. Lys65 acts as the Proton acceptor in catalysis. Glu77 is an NADP(+) binding site. 2 residues coordinate shikimate: Asn86 and Asp102. NADP(+) is bound by residues 126–130 (GAGGA), 149–154 (NRTLTK), and Met213. Position 215 (Tyr215) interacts with shikimate. Gly238 lines the NADP(+) pocket.

This sequence belongs to the shikimate dehydrogenase family. Homodimer.

The enzyme catalyses shikimate + NADP(+) = 3-dehydroshikimate + NADPH + H(+). It participates in metabolic intermediate biosynthesis; chorismate biosynthesis; chorismate from D-erythrose 4-phosphate and phosphoenolpyruvate: step 4/7. Functionally, involved in the biosynthesis of the chorismate, which leads to the biosynthesis of aromatic amino acids. Catalyzes the reversible NADPH linked reduction of 3-dehydroshikimate (DHSA) to yield shikimate (SA). The protein is Shikimate dehydrogenase (NADP(+)) of Actinobacillus succinogenes (strain ATCC 55618 / DSM 22257 / CCUG 43843 / 130Z).